The sequence spans 217 residues: Neuron-specific vesicular protein calcyon (217 aa).

The disordered stretch occupies residues 1 to 25; that stretch reads MVKLGCSFSGKPGKDPGDQDGAAMD. The Extracellular segment spans residues 1-87; that stretch reads MVKLGCSFSG…EEGRRLPTAR (87 aa). Asn73 is a glycosylation site (N-linked (GlcNAc...) asparagine). Residues 88–108 traverse the membrane as a helical segment; it reads MIAFAMALLGCVLIMYKAIWY. Over 109–217 the chain is Cytoplasmic; sequence DQFTCPDGFL…AGSAAPPPAQ (109 aa). Residues 162–217 are disordered; sequence PAAWGDGYRAAKEERKGPTQAGAAAAATEPPGKPSAKAEKEAARKAAGSAAPPPAQ.

The protein belongs to the NSG family. As to quaternary structure, interacts with CLTA. Glycosylated. As to expression, expressed in the pyramidal cells of the prefrontal cortex, in hypothalamus and in caudate nucleus. No expression in spleen. Up-regulated in the prefrontal cortex of schizophrenic patients with nearly twice the levels of non-schizophrenics.

The protein localises to the cytoplasmic vesicle membrane. The protein resides in the cell membrane. Its function is as follows. Interacts with clathrin light chain A and stimulates clathrin self-assembly and clathrin-mediated endocytosis. The chain is Neuron-specific vesicular protein calcyon (CALY) from Homo sapiens (Human).